The following is a 237-amino-acid chain: tRNA1(Val) (adenine(37)-N6)-methyltransferase (237 aa).

This sequence belongs to the methyltransferase superfamily. tRNA (adenine-N(6)-)-methyltransferase family.

The protein localises to the cytoplasm. The enzyme catalyses adenosine(37) in tRNA1(Val) + S-adenosyl-L-methionine = N(6)-methyladenosine(37) in tRNA1(Val) + S-adenosyl-L-homocysteine + H(+). In terms of biological role, specifically methylates the adenine in position 37 of tRNA(1)(Val) (anticodon cmo5UAC). The sequence is that of tRNA1(Val) (adenine(37)-N6)-methyltransferase from Parabacteroides distasonis (strain ATCC 8503 / DSM 20701 / CIP 104284 / JCM 5825 / NCTC 11152).